Reading from the N-terminus, the 275-residue chain is Light-independent protochlorophyllide reductase iron-sulfur ATP-binding protein (275 aa).

ATP-binding positions include 12-17 (GIGKST) and lysine 41. Serine 16 is a binding site for Mg(2+). Residues cysteine 97 and cysteine 131 each contribute to the [4Fe-4S] cluster site. ATP is bound at residue 182 to 183 (NR).

Belongs to the NifH/BchL/ChlL family. As to quaternary structure, homodimer. Protochlorophyllide reductase is composed of three subunits; BchL, BchN and BchB. It depends on [4Fe-4S] cluster as a cofactor.

The enzyme catalyses chlorophyllide a + oxidized 2[4Fe-4S]-[ferredoxin] + 2 ADP + 2 phosphate = protochlorophyllide a + reduced 2[4Fe-4S]-[ferredoxin] + 2 ATP + 2 H2O. Its pathway is porphyrin-containing compound metabolism; bacteriochlorophyll biosynthesis (light-independent). Component of the dark-operative protochlorophyllide reductase (DPOR) that uses Mg-ATP and reduced ferredoxin to reduce ring D of protochlorophyllide (Pchlide) to form chlorophyllide a (Chlide). This reaction is light-independent. The L component serves as a unique electron donor to the NB-component of the complex, and binds Mg-ATP. The polypeptide is Light-independent protochlorophyllide reductase iron-sulfur ATP-binding protein (Chlorobium phaeovibrioides (strain DSM 265 / 1930) (Prosthecochloris vibrioformis (strain DSM 265))).